The chain runs to 149 residues: 3-dehydroquinate dehydratase (149 aa).

Catalysis depends on Tyr-23, which acts as the Proton acceptor. Substrate-binding residues include Asn-75, His-81, and Asp-88. Catalysis depends on His-101, which acts as the Proton donor. Residues Leu-102–Ser-103 and Arg-112 contribute to the substrate site.

The protein belongs to the type-II 3-dehydroquinase family. As to quaternary structure, homododecamer.

The catalysed reaction is 3-dehydroquinate = 3-dehydroshikimate + H2O. It participates in metabolic intermediate biosynthesis; chorismate biosynthesis; chorismate from D-erythrose 4-phosphate and phosphoenolpyruvate: step 3/7. In terms of biological role, catalyzes a trans-dehydration via an enolate intermediate. This chain is 3-dehydroquinate dehydratase, found in Stenotrophomonas maltophilia (strain R551-3).